Here is a 274-residue protein sequence, read N- to C-terminus: Nickel/cobalt efflux system RcnA (274 aa).

The Periplasmic segment spans residues 1–12 (MTEFTTLLQQGN). Residues 13–33 (AWFFIPSAILLGALHGLEPGH) traverse the membrane as a helical segment. Residues 34–56 (SKTMMAAFIIAIKGTIKQAVMLG) are Cytoplasmic-facing. The helical transmembrane segment at 57–77 (LAATISHTAVVWLIAFGGMVI) threads the bilayer. The Periplasmic segment spans residues 78–86 (SKRFTAQSA). The chain crosses the membrane as a helical span at residues 87-107 (EPWLQLISAVIIISTAFWMFW). Residues 108 to 174 (RTWRGERNWL…FDGREVTNWQ (67 aa)) lie on the Cytoplasmic side of the membrane. Basic and acidic residues predominate over residues 127-137 (HHHHDHEDHHD). Residues 127–153 (HHHHDHEDHHDHGHHHHHEHGEYQDAH) are disordered. Residues 175–195 (ILLFGLTGGLIPCPAAITVLL) traverse the membrane as a helical segment. Topologically, residues 196–209 (ICIQLKALTLGATL) are periplasmic. A helical membrane pass occupies residues 210-230 (VVSFSLGLALTLVTVGVGAAI). Over 231 to 251 (SVQQVAKRWSGFNTLAKRAPY) the chain is Cytoplasmic. Residues 252–272 (FSSLLIGLVGVYMGVHGFMGI) traverse the membrane as a helical segment. Over 273–274 (MR) the chain is Periplasmic.

This sequence belongs to the NiCoT transporter (TC 2.A.52) family. RcnA subfamily.

The protein resides in the cell inner membrane. In terms of biological role, efflux system for nickel and cobalt. This Escherichia coli O1:K1 / APEC protein is Nickel/cobalt efflux system RcnA (rcnA).